Consider the following 562-residue polypeptide: Glycine betaine/proline/choline/ectoine transporter VP1456 (562 aa).

Transmembrane regions (helical) follow at residues 68 to 88 (PVFG…LLVE), 110 to 130 (FFMW…FSPL), 147 to 167 (VSWL…FWSV), 203 to 223 (WGVH…FFAF), 243 to 263 (AWGW…LFGL), 287 to 307 (GIGT…LSVV), 322 to 342 (MIVA…TAMG), 373 to 393 (WTVF…MFIA), 404 to 424 (FLFA…SVFG), 456 to 476 (VLPY…VFFI), 503 to 523 (IFWA…GGKE), and 531 to 551 (GVVA…VSLV).

This sequence belongs to the BCCT transporter (TC 2.A.15) family.

Its subcellular location is the cell inner membrane. Its function is as follows. Involved in the uptake of osmoprotectants. Can transport glycine betaine, proline, choline and ectoine. This chain is Glycine betaine/proline/choline/ectoine transporter VP1456, found in Vibrio parahaemolyticus serotype O3:K6 (strain RIMD 2210633).